The following is a 653-amino-acid chain: Polyadenylate-binding protein, cytoplasmic and nuclear (653 aa).

Positions 1–10 (MPSTDLKKQA) are enriched in basic and acidic residues. The tract at residues 1-77 (MPSTDLKKQA…SVATPSGTAP (77 aa)) is disordered. Residues 17–27 (DVNTNNEAVES) show a composition bias toward polar residues. Low complexity predominate over residues 53–68 (AAEPSESTSTPTNASS). Residues 80–158 (ASLYVGELDP…RPCRIMWSQR (79 aa)) form the RRM 1 domain. Position 167 is a phosphothreonine (Thr167). RRM domains are found at residues 168 to 245 (GNVF…HHVS), 261 to 338 (TNVY…RAQK), and 364 to 441 (VNLF…LAQR). Residues 569–646 (PERFTAADLA…AIGVLQEFVD (78 aa)) enclose the PABC domain.

This sequence belongs to the polyadenylate-binding protein type-1 family. In terms of assembly, interacts with cid13.

The protein resides in the cytoplasm. It localises to the nucleus. Its function is as follows. Binds the poly(A) tail of mRNA. Appears to be an important mediator of the multiple roles of the poly(A) tail in mRNA biogenesis, stability and translation. In the nucleus, involved in both mRNA cleavage and polyadenylation. Is also required for efficient mRNA export to the cytoplasm. Acts in concert with a poly(A)-specific nuclease (PAN) to affect poly(A) tail shortening, which may occur concomitantly with either nucleocytoplasmic mRNA transport or translational initiation. In the cytoplasm, stimulates translation initiation and regulates mRNA decay through translation termination-coupled poly(A) shortening, probably mediated by PAN. The polypeptide is Polyadenylate-binding protein, cytoplasmic and nuclear (pab1) (Schizosaccharomyces pombe (strain 972 / ATCC 24843) (Fission yeast)).